Consider the following 270-residue polypeptide: Small ribosomal subunit protein uS3 (270 aa).

A KH type-2 domain is found at 38 to 106 (IRQMLTRGME…QVQLNILEVK (69 aa)). Positions 212 to 270 (EREAAQAAQRAAGPQRRERPGRRRRGGGGGGGQQQQQAEKATAQATEAAKAAKSGNEGS) are disordered. 2 stretches are compositionally biased toward low complexity: residues 216 to 225 (AQAAQRAAGP) and 245 to 263 (QQQQAEKATAQATEAAKAA).

It belongs to the universal ribosomal protein uS3 family. As to quaternary structure, part of the 30S ribosomal subunit. Forms a tight complex with proteins S10 and S14.

In terms of biological role, binds the lower part of the 30S subunit head. Binds mRNA in the 70S ribosome, positioning it for translation. This is Small ribosomal subunit protein uS3 from Thermobifida fusca (strain YX).